A 175-amino-acid polypeptide reads, in one-letter code: Peptide deformylase (175 aa).

Residues C92 and H134 each contribute to the Fe cation site. The active site involves E135. A Fe cation-binding site is contributed by H138.

This sequence belongs to the polypeptide deformylase family. Fe(2+) serves as cofactor.

It catalyses the reaction N-terminal N-formyl-L-methionyl-[peptide] + H2O = N-terminal L-methionyl-[peptide] + formate. Functionally, removes the formyl group from the N-terminal Met of newly synthesized proteins. Requires at least a dipeptide for an efficient rate of reaction. N-terminal L-methionine is a prerequisite for activity but the enzyme has broad specificity at other positions. The sequence is that of Peptide deformylase from Blochmanniella floridana.